The primary structure comprises 96 residues: Large ribosomal subunit protein bL27 (96 aa).

The tract at residues 12–33 is disordered; sequence HKGGGSSANGRNSAGRRLGAKA. Positions 19–28 are enriched in low complexity; it reads ANGRNSAGRR.

It belongs to the bacterial ribosomal protein bL27 family.

In Lactobacillus helveticus (strain DPC 4571), this protein is Large ribosomal subunit protein bL27.